Here is a 511-residue protein sequence, read N- to C-terminus: Cytochrome P450 714C3 (511 aa).

The Lumenal portion of the chain corresponds to 1–6; that stretch reads MEKLLA. A helical; Signal-anchor for type III membrane protein transmembrane segment spans residues 7-27; that stretch reads LIVVLVILLSLALFYLCNILW. Residues 28–511 lie on the Cytoplasmic side of the membrane; it reads LRAVKIRKKL…GLPLMVTKLP (484 aa). Cys-458 is a binding site for heme.

Belongs to the cytochrome P450 family. Heme serves as cofactor.

It is found in the membrane. The protein is Cytochrome P450 714C3 (CYP714C3) of Oryza sativa subsp. japonica (Rice).